A 1908-amino-acid polypeptide reads, in one-letter code: MSRYQPRIILNHPEKVVPDDIMEQFFLTIKTGDIDKIRNFVAQNKNKFNIIEKSSKPGGPNKTPIHAVLELDDRIADQETKLTIIKYLDKMGAPMDLPDSDNVWPIHLAAADQDEDIIDYMLKNKVSIDRKDSSNNTPLHYAVYGKQVPCFDKVKVGSIVPPQDIDKLPLNKTLTDTKDYIVELLNNNPQIKNNLIHTVNTIMNIPSMYQATKTEKDLETDIVDIFTEIASNPSYPSQNYANSMSVQQNKLDQLINRMYILINDDLLRGLTNPLKISPNNTGWGPVTPSSSGQPSSIDRILEREHDYVFNELNNKYSSARNTVIDINLASTNKLSRETIPNIMRNINTNYIDRLIFCPDCSNSEYGEKITLTKMLYLLVWSNYKLNYIPDLVRRIMDNMKIMSTPIHSQIVNSNYTAFPLNSNLLVDDDSSLIGYIFSNLLRNKLNPQSQIDLALANVMDQVDPTINAITGGINSCITNQLVPLFTNSDDPNGAVNLFDGVLNSPINNLWSIPEFRSLREDINDLRPAYRDGKISWFQMLFNLIQEIQPNLVTGNTNDVTNNIFIRGRRTPRYILPLTPLPNSTNYGPPPGPPHGTLNNAYTYSEAFRVMDALVQYITSGQINATRYPRVFDQNINDWIPFIDNEFQSDALLQQYPELTFLYKILAVHTQRAIYSVIFNCISILLRNLPVSPEADIVRNYLELIDDAYMYYLLLPSEPNPAEFTQTGTDDTLADLKQHKWDPDNDLVNWFTKYIQRIPTEFIEQLYQLIIQNIDDFNYGNLENIRNHIESSMGDLSNFITPIINNSEFRNSIKKYFGTFNYPASYNGTRIASMQVIPRFNSLIDDIDFEYRFDDYLTLLRNGAITGLTFLTEVYGYFFVDTKKRLQLIDESLVDINAIVADIIANINNETYYYIPQVILPALVKQLITVITNIYAIKDVLSKFTPVKVEFDSLITNSIPEHNQIINLGNDFVSYVQDQLKIIYTNTIDIIKYHNNVIEFLNTHSASQLINATNTATGNNITTTRVFNRNLIPIQIFPSTLSDNPNFTEIETVLRSYSIPEITYYADATDNTDILIDIFDIGSTLNLYHGTISFDRTGIISNSPNVTDNLQINIENDGTVKDIPDPIAGQWLSFDVNHPRGTSYFNAFIAYITRNFQFDKLNGMPSSVFKFLPEYLSFMKQQIIEQVVQFIVDNKDTNAKKIYDELTNLGTQTSYQAIPDVKNYIIIGKLTDDILNKLFEFAIRQSVSSWIYNITSNDPRYRSIIDPLNQTISIINKKDYLRLSLNQINRETISDLLSTNSPYVDYGLAQVETNPNNLSYTNYQNLNKFIYYLYNINYSSDNFQDGNCYYINPTIVSKLIDSYTLEAKNSDGNTPLHLAISMTNPDIVEILLKHGANPFTFRNIRNESPYDLFNDIIRSHLKYDTGNTVSKSIENFYKPFNDLLVSRLLDDKFKNNIIKNITYGIPIELIMYNHMFHLYLENYRYDFTIEMRDSIRRIFQKYFNITDTVYPTDLFEINRDEDLSKILESEFPQNRVKTSVQLLNPKLRDYQKQLAELNNQIINLTKEKRSTINSQQISFINNLIANLEARKSIVQTNISDLEFKQPTSTVDSAMISSFKSSVNSIQNRIGDRSLNLIDFYRLAFGRIGYSQDLYLNIWRLYLEKDILNARSMIFPLLDQVINNHVSLVKENKMTRENKMTRENKQELAVIVDFYSTVKKYIESKKSLPNNLDDNPILQEEHDHIVYLINLILTPTIRNILISQIYQGLAESDLTNTLIADRNVAIRDILNSEYNGHSLDSFIKDILPNLSVKYFTTIYGNQDPNKFITSASDVFQPIIETVKLNRIIQVSDDSILIQNLRDYVIPFFINTYQNFIHHIELSIYAYEKYILNTYQLTKILQIMSNLQIPK.

ANK repeat units lie at residues 20–50 (DIME…KFNI), 60–97 (PNKT…PMDL), 101–130 (DNVW…SIDR), 134–167 (SNNT…DIDK), and 1370–1399 (DGNT…NPFT). Positions 1539-1603 (VQLLNPKLRD…QTNISDLEFK (65 aa)) form a coiled coil.

The protein localises to the virion. This is Putative ankyrin repeat protein L484 from Acanthamoeba polyphaga mimivirus (APMV).